Consider the following 85-residue polypeptide: MATKKAGGSTRNGRDSEAKRLGVKRFGGESVLAGSIIVRQRGTKFHAGSNVGMGKDHTLFATADGKVKFEVKGEKSRKYVSVVAE.

The disordered stretch occupies residues 1-20 (MATKKAGGSTRNGRDSEAKR).

This sequence belongs to the bacterial ribosomal protein bL27 family.

This is Large ribosomal subunit protein bL27 from Histophilus somni (strain 129Pt) (Haemophilus somnus).